A 37-amino-acid polypeptide reads, in one-letter code: Cytochrome b6-f complex subunit 5 (37 aa).

A helical membrane pass occupies residues 5 to 25 (FLFGIVLGLIPITLAGLFVTA).

Belongs to the PetG family. In terms of assembly, the 4 large subunits of the cytochrome b6-f complex are cytochrome b6, subunit IV (17 kDa polypeptide, PetD), cytochrome f and the Rieske protein, while the 4 small subunits are PetG, PetL, PetM and PetN. The complex functions as a dimer.

It is found in the plastid thylakoid membrane. Its function is as follows. Component of the cytochrome b6-f complex, which mediates electron transfer between photosystem II (PSII) and photosystem I (PSI), cyclic electron flow around PSI, and state transitions. PetG is required for either the stability or assembly of the cytochrome b6-f complex. This Cuscuta reflexa (Southern Asian dodder) protein is Cytochrome b6-f complex subunit 5.